Here is a 701-residue protein sequence, read N- to C-terminus: Glycine--tRNA ligase beta subunit (701 aa).

The protein belongs to the class-II aminoacyl-tRNA synthetase family. In terms of assembly, tetramer of two alpha and two beta subunits.

It localises to the cytoplasm. The enzyme catalyses tRNA(Gly) + glycine + ATP = glycyl-tRNA(Gly) + AMP + diphosphate. This Thiobacillus denitrificans (strain ATCC 25259 / T1) protein is Glycine--tRNA ligase beta subunit.